Reading from the N-terminus, the 319-residue chain is HTH-type transcriptional regulator YidZ (319 aa).

One can recognise an HTH lysR-type domain in the interval 8–65 (LDLNLLLCLQLLMQERSVTKAAKRINVTPSAVSKSLAKLRAWFDDPLFVNSPLGLSPT). The segment at residues 25–44 (VTKAAKRINVTPSAVSKSLA) is a DNA-binding region (H-T-H motif).

It belongs to the LysR transcriptional regulatory family.

Involved in anaerobic NO protection. In Escherichia coli (strain K12 / MC4100 / BW2952), this protein is HTH-type transcriptional regulator YidZ.